We begin with the raw amino-acid sequence, 359 residues long: Mitochondrial glutathione transporter SLC25A39 (359 aa).

Residues 1-14 (MDDQDPGGISPLQQ) lie on the Mitochondrial intermembrane side of the membrane. Solcar repeat units lie at residues 9–151 (ISPL…LKAF), 159–243 (SDLY…VKSW), and 253–347 (TSVG…GKSF). The chain crosses the membrane as a helical span at residues 15-35 (MVASGAGAVVTSLFMTPLDVV). Over 36–121 (KVRLQSQRPS…VKIVRHEGTR (86 aa)) the chain is Mitochondrial matrix. Residues C74, C78, C88, and C94 each coordinate [2Fe-2S] cluster. Residues 122–142 (TLWSGLPATLVMTVPATAIYF) form a helical membrane-spanning segment. At 143 to 164 (TAYDQLKAFLCGQSLTSDLYAP) the chain is on the mitochondrial intermembrane side. The helical transmembrane segment at 165–185 (MVAGALARMGTVTVVSPLELV) threads the bilayer. Over 186–214 (RTKLQAQHVSYRELASSVQAAVTQGGWRS) the chain is Mitochondrial matrix. The chain crosses the membrane as a helical span at residues 215–235 (LWLGWGPTALRDVPFSALYWF). Residues 236–255 (NYELVKSWLSGLRPKDQTSV) are Mitochondrial intermembrane-facing. Residues 256-276 (GISFVAGGISGMVAATLTLPF) form a helical membrane-spanning segment. Residues 277–317 (DVVKTQRQMSLGAVEAVRVKPPRVDSTWLLLRRIRAESGTR) lie on the Mitochondrial matrix side of the membrane. A helical transmembrane segment spans residues 318–338 (GLFAGFLPRIIKAAPSCAIMI). Residues 339-359 (STYEFGKSFFQRLNQEQPLGR) lie on the Mitochondrial intermembrane side of the membrane.

The protein belongs to the mitochondrial carrier (TC 2.A.29) family. In terms of processing, cleaved and degraded by AFG3L2; degradation by AFG3L2 is regulated by the ability of SLC25A39 to bind iron-sulfur. In absence of mitochondrial glutathione, SLC25A39 binds iron-sulfur, preventing cleavage and degradation by AFG3L2. The presence of mitochondrial glutathione prevents iron-sulfur-binding to SLC25A39, promoting cleavage and degradation by AFG3L2. Abundant expression in bone marrow, spleen, testis and kidney.

The protein resides in the mitochondrion inner membrane. It catalyses the reaction glutathione(in) = glutathione(out). With respect to regulation, the activity of SLC25A39 is regulated by levels of mitochondrial glutathione via its ability to bind [2Fe-2S] iron-sulfur cluster. Upon physiological levels of mitochondrial glutathione, glutathione prevents iron-sulfur-binding to SLC25A39 promoting cleavage and degradation by AFG3L2. Upon depletion of mitochondrial glutathione, SLC25A39 binds iron-sulfur, preventing cleavage and degradation by AFG3L2. In terms of biological role, mitochondrial transporter required for glutathione import into mitochondria. Glutathione, which plays key roles in oxidative metabolism, is produced exclusively in the cytosol and is imported in many organelles. Mitochondrial glutathione is required for the activity and stability of proteins containing iron-sulfur clusters, as well as erythropoiesis. The protein is Mitochondrial glutathione transporter SLC25A39 of Mus musculus (Mouse).